We begin with the raw amino-acid sequence, 205 residues long: GTP cyclohydrolase-2 (205 aa).

Arg49–Glu53 is a binding site for GTP. 3 residues coordinate Zn(2+): Cys54, Cys65, and Cys67. Residues Gln70, Glu92–Arg94, and Thr114 contribute to the GTP site. The active-site Proton acceptor is the Asp126. Arg128 serves as the catalytic Nucleophile. The GTP site is built by Thr149 and Lys154.

Belongs to the GTP cyclohydrolase II family. Zn(2+) is required as a cofactor.

The catalysed reaction is GTP + 4 H2O = 2,5-diamino-6-hydroxy-4-(5-phosphoribosylamino)-pyrimidine + formate + 2 phosphate + 3 H(+). Its pathway is cofactor biosynthesis; riboflavin biosynthesis; 5-amino-6-(D-ribitylamino)uracil from GTP: step 1/4. Its function is as follows. Catalyzes the conversion of GTP to 2,5-diamino-6-ribosylamino-4(3H)-pyrimidinone 5'-phosphate (DARP), formate and pyrophosphate. The sequence is that of GTP cyclohydrolase-2 from Pseudomonas entomophila (strain L48).